The primary structure comprises 259 residues: Undecaprenyl-diphosphatase (259 aa).

7 helical membrane-spanning segments follow: residues 1-21 (MEIF…FLPI), 40-60 (QITL…IIFW), 75-95 (WLTI…ILFE), 101-121 (LFSS…LLYL), 179-199 (SFLL…KDAL), 206-226 (LTWL…YFAI), and 239-259 (TVFA…AGIF).

This sequence belongs to the UppP family.

The protein resides in the cell inner membrane. It catalyses the reaction di-trans,octa-cis-undecaprenyl diphosphate + H2O = di-trans,octa-cis-undecaprenyl phosphate + phosphate + H(+). In terms of biological role, catalyzes the dephosphorylation of undecaprenyl diphosphate (UPP). Confers resistance to bacitracin. The chain is Undecaprenyl-diphosphatase from Halothermothrix orenii (strain H 168 / OCM 544 / DSM 9562).